We begin with the raw amino-acid sequence, 273 residues long: CUE domain-containing protein 2-A (273 aa).

The interval 92–121 (GKENVSPKPTAEVSFMTPTSSSTESSKKIE) is disordered. In terms of domain architecture, CUE spans 135 to 178 (DAKNGIDLLLEIFPSCTVSQAQTALSMAKGDLEDAVQIIVDGKV).

This sequence belongs to the CUEDC2 family. Post-translationally, phosphorylated.

The protein resides in the cytoplasm. It is found in the nucleus. In terms of biological role, may play a role in targeting proteins for ubiquitination and subsequent proteasomal degradation. The sequence is that of CUE domain-containing protein 2-A (cuedc2-a) from Xenopus laevis (African clawed frog).